Reading from the N-terminus, the 212-residue chain is Phosphatidylserine decarboxylase proenzyme (212 aa).

Catalysis depends on S182, which acts as the Schiff-base intermediate with substrate; via pyruvic acid. Residue S182 is modified to Pyruvic acid (Ser); by autocatalysis.

The protein belongs to the phosphatidylserine decarboxylase family. PSD-A subfamily. In terms of assembly, heterodimer of a large membrane-associated beta subunit and a small pyruvoyl-containing alpha subunit. Pyruvate serves as cofactor. Post-translationally, is synthesized initially as an inactive proenzyme. Formation of the active enzyme involves a self-maturation process in which the active site pyruvoyl group is generated from an internal serine residue via an autocatalytic post-translational modification. Two non-identical subunits are generated from the proenzyme in this reaction, and the pyruvate is formed at the N-terminus of the alpha chain, which is derived from the carboxyl end of the proenzyme. The post-translation cleavage follows an unusual pathway, termed non-hydrolytic serinolysis, in which the side chain hydroxyl group of the serine supplies its oxygen atom to form the C-terminus of the beta chain, while the remainder of the serine residue undergoes an oxidative deamination to produce ammonia and the pyruvoyl prosthetic group on the alpha chain.

It is found in the cell membrane. The catalysed reaction is a 1,2-diacyl-sn-glycero-3-phospho-L-serine + H(+) = a 1,2-diacyl-sn-glycero-3-phosphoethanolamine + CO2. Its pathway is phospholipid metabolism; phosphatidylethanolamine biosynthesis; phosphatidylethanolamine from CDP-diacylglycerol: step 2/2. Functionally, catalyzes the formation of phosphatidylethanolamine (PtdEtn) from phosphatidylserine (PtdSer). In Paraburkholderia xenovorans (strain LB400), this protein is Phosphatidylserine decarboxylase proenzyme.